The following is a 252-amino-acid chain: uncharacterized protein (252 aa).

This sequence belongs to the methyltransferase superfamily.

This is an uncharacterized protein from Mycobacterium sp. (strain KMS).